The primary structure comprises 218 residues: Glutathione S-transferase Mu 1 (218 aa).

The region spanning 2-88 is the GST N-terminal domain; it reads PMTLGYWDIR…YIARKHNLCG (87 aa). 7 to 8 serves as a coordination point for glutathione; that stretch reads YW. A Phosphothreonine modification is found at threonine 34. Residues 43–46, lysine 50, 59–60, and 72–73 each bind glutathione; these read RSQW, NL, and QS. Positions 90 to 208 constitute a GST C-terminal domain; it reads TEEEKIRVDI…KSSRFLPKPL (119 aa). Residue tyrosine 116 participates in substrate binding.

It belongs to the GST superfamily. Mu family. In terms of assembly, homodimer.

It localises to the cytoplasm. It carries out the reaction RX + glutathione = an S-substituted glutathione + a halide anion + H(+). It catalyses the reaction prostaglandin A2 + glutathione = prostaglandin A2-S-(R)-glutathione. The enzyme catalyses prostaglandin J2 + glutathione = prostaglandin J2-S-(R)-glutathione. The catalysed reaction is prostaglandin J2 + glutathione = prostaglandin J2-S-(S)-glutathione. It carries out the reaction prostaglandin A2 + glutathione = prostaglandin A2-S-(S)-glutathione. It catalyses the reaction 11(S)-hydroxy-14(S),15(S)-epoxy-(5Z,8Z,12E)-eicosatrienoate + glutathione = (11S,15S)-dihydroxy-14(R)-S-glutathionyl-(5Z,8Z,12E)-eicosatrienoate. Conjugation of reduced glutathione to a wide number of exogenous and endogenous hydrophobic electrophiles. Involved in the formation of glutathione conjugates of both prostaglandin A2 (PGA2) and prostaglandin J2 (PGJ2). Participates in the formation of novel hepoxilin regioisomers. The sequence is that of Glutathione S-transferase Mu 1 (GSTM1) from Macaca fascicularis (Crab-eating macaque).